Here is a 326-residue protein sequence, read N- to C-terminus: D-alanine--D-alanine ligase (326 aa).

Positions 121–320 (ISVLRPYGIK…LKDLFGSTIE (200 aa)) constitute an ATP-grasp domain. An ATP-binding site is contributed by 149–204 (VDKVGLPCFVKANRAGSSFGVTKVKTEDEIISAAKTAFTEDDEAIIESFLDGTEVS). E275, E287, and N289 together coordinate Mg(2+).

This sequence belongs to the D-alanine--D-alanine ligase family. It depends on Mg(2+) as a cofactor. Mn(2+) is required as a cofactor.

The protein resides in the cytoplasm. The catalysed reaction is 2 D-alanine + ATP = D-alanyl-D-alanine + ADP + phosphate + H(+). It participates in cell wall biogenesis; peptidoglycan biosynthesis. Its function is as follows. Cell wall formation. In Christiangramia forsetii (strain DSM 17595 / CGMCC 1.15422 / KT0803) (Gramella forsetii), this protein is D-alanine--D-alanine ligase.